Consider the following 424-residue polypeptide: 3-ketoacyl-CoA thiolase A, peroxisomal (424 aa).

The N-terminal 26 residues, 1-26, are a transit peptide targeting the peroxisome; sequence MHRLQVVLGHLAGRPESSSALQAAPC. The segment at 1-26 is PTS2-type peroxisomal targeting signal; sequence MHRLQVVLGHLAGRPESSSALQAAPC. The Acyl-thioester intermediate role is filled by cysteine 123. Residues lysine 173 and lysine 234 each carry the N6-acetyllysine modification. Residues histidine 377 and cysteine 408 each act as proton acceptor in the active site.

Belongs to the thiolase-like superfamily. Thiolase family. As to quaternary structure, homodimer. Interacts (via PTS2-type peroxisomal targeting signal region) with PEX7; leading to its translocation into peroxisomes. As to expression, mainly expressed in liver and intestine.

The protein localises to the peroxisome. It carries out the reaction an acyl-CoA + acetyl-CoA = a 3-oxoacyl-CoA + CoA. It catalyses the reaction 2 acetyl-CoA = acetoacetyl-CoA + CoA. The enzyme catalyses tetradecanoyl-CoA + acetyl-CoA = 3-oxohexadecanoyl-CoA + CoA. The catalysed reaction is hexanoyl-CoA + acetyl-CoA = 3-oxooctanoyl-CoA + CoA. It carries out the reaction 3-oxohexadecanedioyl-CoA + CoA = tetradecanedioyl-CoA + acetyl-CoA. It catalyses the reaction 3-oxo-(6Z,9Z,12Z,15Z,18Z,21Z)-tetracosahexaenoyl-CoA + CoA = (4Z,7Z,10Z,13Z,16Z,19Z)-docosahexaenoyl-CoA + acetyl-CoA. It participates in lipid metabolism; peroxisomal fatty acid beta-oxidation. Its function is as follows. Responsible for the thiolytic cleavage of straight chain 3-keto fatty acyl-CoAs (3-oxoacyl-CoAs). Plays an important role in fatty acid peroxisomal beta-oxidation. Catalyzes the cleavage of short, medium, long, and very long straight chain 3-oxoacyl-CoAs. This Mus musculus (Mouse) protein is 3-ketoacyl-CoA thiolase A, peroxisomal.